The following is a 646-amino-acid chain: Translation initiation factor IF-2 (646 aa).

The 170-residue stretch at 146 to 315 folds into the tr-type G domain; it reads PRPPVVTVMG…LLVAEMEELR (170 aa). The G1 stretch occupies residues 155-162; that stretch reads GHVDHGKT. Residue 155–162 coordinates GTP; sequence GHVDHGKT. Positions 180-184 are G2; the sequence is GITQH. The interval 201-204 is G3; it reads DTPG. GTP is bound by residues 201-205 and 255-258; these read DTPGH and NKID. The interval 255 to 258 is G4; it reads NKID. Residues 291-293 are G5; the sequence is SAK.

The protein belongs to the TRAFAC class translation factor GTPase superfamily. Classic translation factor GTPase family. IF-2 subfamily.

Its subcellular location is the cytoplasm. One of the essential components for the initiation of protein synthesis. Protects formylmethionyl-tRNA from spontaneous hydrolysis and promotes its binding to the 30S ribosomal subunits. Also involved in the hydrolysis of GTP during the formation of the 70S ribosomal complex. The protein is Translation initiation factor IF-2 of Clostridioides difficile (strain 630) (Peptoclostridium difficile).